Consider the following 95-residue polypeptide: Small integral membrane protein 26 (95 aa).

The helical transmembrane segment at 13 to 35 (MSVVYGIGTWSVLGSLLYYSRTM) threads the bilayer.

Belongs to the SMIM26 family. Interacts with AGK and SLC25A11. Detected in kidney (at protein level).

It is found in the mitochondrion outer membrane. Its function is as follows. May play a role in cell viability. The chain is Small integral membrane protein 26 from Homo sapiens (Human).